The following is a 259-amino-acid chain: MRWSESVYSLRSTLKPLFQPDSPLTLRKRNKSLCEYNIRRSRRRPEEESIQSLSKHVSTTTQPCPTDGRMMFDLSNPYHSSETVVGRDAEGPANPLDTPFSEFCFSQLVSNSAHSYLDFDLFDEPTPGTNQAQTIEPGQQTSGFENPIPYHTHRNDTPILDWSKLDRYQSLHQHSAAQFYDSLGTEQDDSAARCTLALFSGRIVADKAETNPFLIHKTHRTTVLLQNAHVGGRRQQAVLDKCYTGLGYTSLGSVRTKAR.

The tract at residues 39 to 66 is disordered; the sequence is RRSRRRPEEESIQSLSKHVSTTTQPCPT. The span at 50–64 shows a compositional bias: polar residues; sequence IQSLSKHVSTTTQPC.

The protein operates within mycotoxin biosynthesis. In terms of biological role, part of the gene clusters that mediate the biosynthesis of AM-toxins, host-selective toxins (HSTs) causing Alternaria blotch on apple, a worldwide distributed disease. AM-toxins are cyclic depsipeptides containing the 3 residues 2-hydroxy-isovaleric acid (2-HIV), dehydroalanine, L-alanine which are common for all 3 AM-toxins I to III. The fourth precursor is L-alpha-amino-methoxyphenyl-valeric acid (L-Amv) for AM-toxin I, L-alpha-amino-phenyl-valeric acid (L-Apv) for AM-toxin II, and L-alpha-amino-hydroxyphenyl-valeric acid (L-Ahv) for AM-toxin III. AM-toxins have two target sites for affecting susceptible apple cells; they cause invagination of the plasma membrane and electrolyte loss and chloroplast disorganization. The non-ribosomal peptide synthetase AMT1 contains 4 catalytic modules and is responsible for activation of each residue in AM-toxin. The aldo-keto reductase AMT2 catalyzes the conversion of 2-keto-isovaleric acid (2-KIV) to 2-hydroxy-isovaleric acid (2-HIV), one of the precursor residues incorporated by AMT1 during AM-toxin biosynthesis, by reduction of its ketone to an alcohol. The cytochrome P450 monooxygenase AMT3 and the thioesterase AMT4 are also important for AM-toxin production, but their exact function within the AM-toxin biosynthesis are not known yet. Up to 21 proteins (including AMT1 to AMT4) are predicted to be involved in AM-toxin biosynthesis since their expression ishighly up-regulated in AM-toxin-producing cultures. In Alternaria alternata (Alternaria rot fungus), this protein is AM-toxin biosynthesis protein 11.